The primary structure comprises 505 residues: Histidine ammonia-lyase (505 aa).

The segment at residues 141 to 143 (ASG) is a cross-link (5-imidazolinone (Ala-Gly)). Ser-142 carries the post-translational modification 2,3-didehydroalanine (Ser).

The protein belongs to the PAL/histidase family. Post-translationally, contains an active site 4-methylidene-imidazol-5-one (MIO), which is formed autocatalytically by cyclization and dehydration of residues Ala-Ser-Gly.

The protein resides in the cytoplasm. The catalysed reaction is L-histidine = trans-urocanate + NH4(+). It functions in the pathway amino-acid degradation; L-histidine degradation into L-glutamate; N-formimidoyl-L-glutamate from L-histidine: step 1/3. This is Histidine ammonia-lyase from Bacillus cereus (strain ZK / E33L).